Here is a 416-residue protein sequence, read N- to C-terminus: Gamma-glutamyl phosphate reductase (416 aa).

The protein belongs to the gamma-glutamyl phosphate reductase family.

Its subcellular location is the cytoplasm. The enzyme catalyses L-glutamate 5-semialdehyde + phosphate + NADP(+) = L-glutamyl 5-phosphate + NADPH + H(+). It functions in the pathway amino-acid biosynthesis; L-proline biosynthesis; L-glutamate 5-semialdehyde from L-glutamate: step 2/2. Functionally, catalyzes the NADPH-dependent reduction of L-glutamate 5-phosphate into L-glutamate 5-semialdehyde and phosphate. The product spontaneously undergoes cyclization to form 1-pyrroline-5-carboxylate. The chain is Gamma-glutamyl phosphate reductase from Salmonella arizonae (strain ATCC BAA-731 / CDC346-86 / RSK2980).